A 249-amino-acid chain; its full sequence is Putative nicotinamide mononucleotide adenylyltransferase (249 aa).

Positions 40 and 41 each coordinate NAD(+). Histidine 48 is a binding site for ATP. Residues threonine 97, glycine 129, aspartate 131, arginine 165, and asparagine 206 each coordinate NAD(+). An ATP-binding site is contributed by 214 to 217 (TRAR).

This sequence belongs to the eukaryotic NMN adenylyltransferase family. POF1 subfamily.

It localises to the cytoplasm. Its subcellular location is the nucleus. The catalysed reaction is beta-nicotinamide D-ribonucleotide + ATP + H(+) = diphosphate + NAD(+). Its pathway is cofactor biosynthesis; NAD(+) biosynthesis; NAD(+) from nicotinamide D-ribonucleotide: step 1/1. In terms of biological role, catalyzes the formation of NAD(+) from nicotinamide mononucleotide (NMN) and ATP. Involved in the salvage pathway for NAD(+) biosynthesis via NMN. This Schizosaccharomyces pombe (strain 972 / ATCC 24843) (Fission yeast) protein is Putative nicotinamide mononucleotide adenylyltransferase.